We begin with the raw amino-acid sequence, 364 residues long: Putative zinc metalloprotease all3971 (364 aa).

Zn(2+) is bound at residue H17. The active site involves E18. Residue H21 participates in Zn(2+) binding. The next 3 helical transmembrane spans lie at 92–114 (AIVI…LAQV), 281–303 (LFFF…LPAL), and 329–346 (VMQT…FLIV). The region spanning 103 to 188 (LIFAYMLLLA…KSIQLTVARG (86 aa)) is the PDZ domain.

It belongs to the peptidase M50B family. Requires Zn(2+) as cofactor.

The protein localises to the cell inner membrane. This Nostoc sp. (strain PCC 7120 / SAG 25.82 / UTEX 2576) protein is Putative zinc metalloprotease all3971.